Reading from the N-terminus, the 239-residue chain is uncharacterized protein (239 aa).

The segment at 94–114 (CEVSGKEIPFERLEALPTATT) adopts a dksA C4-type; degenerate zinc-finger fold. Acidic residues predominate over residues 133 to 158 (ETPFGQFEFDDDEEIRAPYDSEDSYQ). The disordered stretch occupies residues 133-182 (ETPFGQFEFDDDEEIRAPYDSEDSYQDVEKYGNSQTPQDMENPPLSYDDM).

This is an uncharacterized protein from Bacillus subtilis (strain 168).